Consider the following 315-residue polypeptide: Ribosomal RNA small subunit methyltransferase H (315 aa).

S-adenosyl-L-methionine is bound by residues Gly-35–His-37, Asp-55, Phe-79, Asp-101, and Gln-108.

This sequence belongs to the methyltransferase superfamily. RsmH family.

It is found in the cytoplasm. It carries out the reaction cytidine(1402) in 16S rRNA + S-adenosyl-L-methionine = N(4)-methylcytidine(1402) in 16S rRNA + S-adenosyl-L-homocysteine + H(+). Its function is as follows. Specifically methylates the N4 position of cytidine in position 1402 (C1402) of 16S rRNA. This chain is Ribosomal RNA small subunit methyltransferase H, found in Sodalis glossinidius (strain morsitans).